We begin with the raw amino-acid sequence, 347 residues long: GMP reductase (347 aa).

108-131 contributes to the NADP(+) binding site; sequence ADFDKMKQILALSPALKFICIDVA. Glycine 181 and glycine 183 together coordinate K(+). Catalysis depends on cysteine 186, which acts as the Thioimidate intermediate. Position 216–239 (216–239) interacts with NADP(+); sequence IVSDGGCSVPGDVAKAFGGGADFV.

It belongs to the IMPDH/GMPR family. GuaC type 1 subfamily. Homotetramer.

The enzyme catalyses IMP + NH4(+) + NADP(+) = GMP + NADPH + 2 H(+). Its function is as follows. Catalyzes the irreversible NADPH-dependent deamination of GMP to IMP. It functions in the conversion of nucleobase, nucleoside and nucleotide derivatives of G to A nucleotides, and in maintaining the intracellular balance of A and G nucleotides. The protein is GMP reductase of Yersinia enterocolitica serotype O:8 / biotype 1B (strain NCTC 13174 / 8081).